Reading from the N-terminus, the 37-residue chain is Tick defensin 2 (37 aa).

Disulfide bonds link Cys-4–Cys-26, Cys-11–Cys-34, and Cys-15–Cys-36.

Belongs to the invertebrate defensin family.

The protein resides in the secreted. Antibacterial peptide mostly active against Gram-positive bacteria (MIC=0.24 ug/ml on Bacillus subtilis, and MIC=0.94 ug/ml on Micrococcus luteus, MIC&gt;120 ug/ml on both Escherichia coli and Pseudomonas aeruginosa). In Ornithodoros savignyi (African eyed tampan), this protein is Tick defensin 2.